A 358-amino-acid chain; its full sequence is Naringenin,2-oxoglutarate 3-dioxygenase (358 aa).

The Fe2OG dioxygenase domain maps to Cys-190 to Pro-294. Fe cation is bound by residues His-217, Asp-219, and His-275. Arg-285 contacts 2-oxoglutarate.

It belongs to the iron/ascorbate-dependent oxidoreductase family. As to quaternary structure, interacts with Dihydroflavonol-4-reductase (TT3), chalcone synthase (TT4) and chalcone isomerase (TT5) to form a flavonoid enzyme complex. The cofactor is Fe(2+). It depends on L-ascorbate as a cofactor.

The catalysed reaction is a (2S)-flavan-4-one + 2-oxoglutarate + O2 = a (2R,3R)-dihydroflavonol + succinate + CO2. The protein operates within secondary metabolite biosynthesis; flavonoid biosynthesis. In terms of biological role, catalyzes the 3-beta-hydroxylation of 2S-flavanones to 2R,3R-dihydroflavonols which are intermediates in the biosynthesis of flavonols, anthocyanidins, catechins and proanthocyanidins in plants. In Arabidopsis thaliana (Mouse-ear cress), this protein is Naringenin,2-oxoglutarate 3-dioxygenase (F3H).